Here is a 91-residue protein sequence, read N- to C-terminus: Large ribosomal subunit protein eL31 (91 aa).

This sequence belongs to the eukaryotic ribosomal protein eL31 family.

This Pyrobaculum neutrophilum (strain DSM 2338 / JCM 9278 / NBRC 100436 / V24Sta) (Thermoproteus neutrophilus) protein is Large ribosomal subunit protein eL31.